The chain runs to 342 residues: MLDIKRKQDHIEINLTKNVESGLSSGFESVQFVHNALPEINYSSIDTTTTFLNKILQAPILISSMTGGTPRARDINCRLAAAAQKAGIAMGLGSMRTLLTEPSTLDTFTVRNNAPDIVLLANIGAVQLNYGVTPKQCQYLVDSVKADALILHLNVLQELTQPEGDKNWENLLPKIKEVVNYLSVPVIIKEVGFGLSKKTAKQFIDIGVKILDVAGSGGTSWSQVEAYRATNSLQNRIASSFINWGIPTLDSLKMVREASKDISVIASGGLKSGIDGAKAIRMGADIFGLAGPFLKAADVSENLVSEEIQLIIEQLKITMMCTGSRTINNLKKAELRMNHIPL.

Arginine 6–lysine 7 lines the substrate pocket. Residues serine 63, serine 64–threonine 66, serine 94, and asparagine 122 each bind FMN. Serine 94–arginine 96 provides a ligand contact to substrate. Glutamine 157 lines the substrate pocket. Residue glutamate 158 coordinates Mg(2+). FMN-binding positions include lysine 189, threonine 219, glycine 269–lysine 271, and alanine 290–glycine 291.

Belongs to the IPP isomerase type 2 family. In terms of assembly, homooctamer. Dimer of tetramers. The cofactor is FMN. NADPH serves as cofactor. Mg(2+) is required as a cofactor.

It is found in the cytoplasm. The catalysed reaction is isopentenyl diphosphate = dimethylallyl diphosphate. Involved in the biosynthesis of isoprenoids. Catalyzes the 1,3-allylic rearrangement of the homoallylic substrate isopentenyl (IPP) to its allylic isomer, dimethylallyl diphosphate (DMAPP). This chain is Isopentenyl-diphosphate delta-isomerase, found in Rickettsia bellii (strain RML369-C).